The chain runs to 200 residues: Alpha/beta-tubulin-N-acetyltransferase 9 (200 aa).

Positions 34–181 constitute an N-acetyltransferase domain; it reads ETLRELTASE…HEVTLERPIT (148 aa).

Belongs to the acetyltransferase family. GNAT subfamily. As to quaternary structure, interacts with microtubules as well as alpha/beta-tubulin heterodimers.

The protein resides in the nucleus. Its subcellular location is the cytoplasm. It is found in the cytoskeleton. The protein localises to the spindle. It localises to the spindle pole. The catalysed reaction is N-terminal L-methionyl-[tubulin] + acetyl-CoA = N-terminal N(alpha)-acetyl-L-methionyl-[tubulin] + CoA + H(+). Its function is as follows. N-acetyltransferase that mediates the acetylation of the N-terminal residues of alpha- and beta-tubulin. Required for microtubule stability and inhibition of JNK signaling to promote cell survival during development, possibly acting independently of its N-acetyltransferase activity. Necessary for the stabilization of spindle microtubules and for mitosis progression. Regulates microtubule stability by inhibiting Spastin-mediated depolymerization and promoting Eb1-mediated polymerization. The protein is Alpha/beta-tubulin-N-acetyltransferase 9 of Drosophila melanogaster (Fruit fly).